The chain runs to 198 residues: Large ribosomal subunit protein uL24c (198 aa).

A chloroplast-targeting transit peptide spans 1-50 (MATMSALQSSFTSLSLSPSSSFLGQRLISPISLSVTSPVKPAENPCLVLA).

The protein belongs to the universal ribosomal protein uL24 family. As to quaternary structure, part of the 50S ribosomal subunit.

It localises to the plastid. Its subcellular location is the chloroplast. One of two assembly initiator proteins, it binds directly to the 5'-end of the 23S rRNA, where it nucleates assembly of the 50S subunit. Required for optimal plastid performance in terms of photosynthesis and growth. Required for the translation of plastid mRNAs. Plays a critical role in biosynthesis of thylakoid membrane proteins encoded by chloroplast genes. In Arabidopsis thaliana (Mouse-ear cress), this protein is Large ribosomal subunit protein uL24c (RPL24).